A 254-amino-acid polypeptide reads, in one-letter code: Dolichol-phosphate mannosyltransferase subunit 1 (254 aa).

The GDP-alpha-D-mannose site is built by Pro-25, Tyr-27, Glu-29, Val-56, Asp-58, Asp-111, Ala-112, Asp-113, Arg-140, and Arg-227. Residue Asp-113 coordinates Mg(2+). Asp-113 lines the Mn(2+) pocket.

The protein belongs to the glycosyltransferase 2 family. Component of the dolichol-phosphate mannose (DPM) synthase complex composed of dpm1, dpm2 and dpm3. Mg(2+) is required as a cofactor. It depends on Mn(2+) as a cofactor. The cofactor is Ca(2+).

It is found in the endoplasmic reticulum. It catalyses the reaction a di-trans,poly-cis-dolichyl phosphate + GDP-alpha-D-mannose = a di-trans,poly-cis-dolichyl beta-D-mannosyl phosphate + GDP. The protein operates within protein modification; protein glycosylation. Transfers mannose from GDP-mannose to dolichol monophosphate to form dolichol phosphate mannose (Dol-P-Man) which is the mannosyl donor in pathways leading to N-glycosylation, glycosyl phosphatidylinositol membrane anchoring, and O-mannosylation of proteins; catalytic subunit of the dolichol-phosphate mannose (DPM) synthase complex. This Dictyostelium discoideum (Social amoeba) protein is Dolichol-phosphate mannosyltransferase subunit 1 (dpm1).